A 127-amino-acid polypeptide reads, in one-letter code: Riboflavin kinase (127 aa).

10–15 (GLGEGR) serves as a coordination point for CDP. Residues threonine 39 and asparagine 41 each coordinate Mg(2+). Positions 96 and 104 each coordinate FMN. Residue 109–112 (VHLR) coordinates CDP.

It belongs to the archaeal riboflavin kinase family. Requires Mg(2+) as cofactor.

The catalysed reaction is riboflavin + CTP = CDP + FMN + H(+). The protein operates within cofactor biosynthesis; FMN biosynthesis; FMN from riboflavin (CTP route): step 1/1. Catalyzes the CTP-dependent phosphorylation of riboflavin (vitamin B2) to form flavin mononucleotide (FMN). This chain is Riboflavin kinase, found in Methanococcus maripaludis (strain C7 / ATCC BAA-1331).